The sequence spans 403 residues: Argininosuccinate synthase (403 aa).

ATP contacts are provided by residues 13–21 (AYSGGLDTS) and A40. 2 residues coordinate L-citrulline: Y92 and S97. An ATP-binding site is contributed by G122. Positions 124, 128, and 129 each coordinate L-aspartate. N128 contributes to the L-citrulline binding site. Residues R132, S181, S190, E266, and Y278 each contribute to the L-citrulline site.

This sequence belongs to the argininosuccinate synthase family. Type 1 subfamily. In terms of assembly, homotetramer.

Its subcellular location is the cytoplasm. It catalyses the reaction L-citrulline + L-aspartate + ATP = 2-(N(omega)-L-arginino)succinate + AMP + diphosphate + H(+). It participates in amino-acid biosynthesis; L-arginine biosynthesis; L-arginine from L-ornithine and carbamoyl phosphate: step 2/3. The protein is Argininosuccinate synthase of Aliivibrio salmonicida (strain LFI1238) (Vibrio salmonicida (strain LFI1238)).